A 205-amino-acid chain; its full sequence is Thymidylate kinase (205 aa).

9–16 (GPEGSGKT) is an ATP binding site.

It belongs to the thymidylate kinase family.

It carries out the reaction dTMP + ATP = dTDP + ADP. In terms of biological role, phosphorylation of dTMP to form dTDP in both de novo and salvage pathways of dTTP synthesis. The chain is Thymidylate kinase from Staphylococcus aureus (strain NCTC 8325 / PS 47).